Consider the following 465-residue polypeptide: MTKTMYEKIWDAHLVYEPESGSPILFVDRHLMHEVTSPQAFEGLKLQNRGVRNTHSILATMDHCVPTKGRAEISDPVAAKQIQTMAVNCKEHGINLYDMSNANNGIIHIVVPEHGFVHPGMVVCCGDSHTSTHGAFGTLAFGIGTSEVEHVMATQTLQQQKSKTLLINVEGTLSKHATAKDIALAIIGKTGTAGGTGYVIEFAGDAVVNLTMEGRMTLCNMAIEAGARAGLIAPDQKTFDFLEGKEFAPKGKDWDAALAYWKTLPSDKGADFDKVINFKAEDIAPQVTWGTSPEQVISVNGIVPAPTDFDDPIKAQACKNALEYMKIKAGQKMTDVNVDIVFLGSCTNGRIEDFRAAAEMLKGKTIAPGVQAIAVPGSYPVKEQAEAEGLDKIFLDAGWEWREPGCSMCLAMNGDELTEGQRSASTSNRNFEGRQGKNGLTHLVSPAMAAAASIAGHFVDIRDWA.

3 residues coordinate [4Fe-4S] cluster: Cys-346, Cys-406, and Cys-409.

Belongs to the aconitase/IPM isomerase family. LeuC type 1 subfamily. Heterodimer of LeuC and LeuD. The cofactor is [4Fe-4S] cluster.

The enzyme catalyses (2R,3S)-3-isopropylmalate = (2S)-2-isopropylmalate. Its pathway is amino-acid biosynthesis; L-leucine biosynthesis; L-leucine from 3-methyl-2-oxobutanoate: step 2/4. Its function is as follows. Catalyzes the isomerization between 2-isopropylmalate and 3-isopropylmalate, via the formation of 2-isopropylmaleate. The chain is 3-isopropylmalate dehydratase large subunit from Psychromonas ingrahamii (strain DSM 17664 / CCUG 51855 / 37).